Consider the following 743-residue polypeptide: Glycerol dehydrogenase large subunit (743 aa).

The first 24 residues, 1-24, serve as a signal peptide directing secretion; it reads MRRSHLLATVACATLACAPLAANA. Low complexity predominate over residues 27 to 41; sequence APAGSGGSPTSSVPG. Disordered regions lie at residues 27–115 and 445–474; these read APAG…GHDD and ILPV…STGM.

It belongs to the bacterial PQQ dehydrogenase family. Pyrroloquinoline quinone is required as a cofactor.

It localises to the secreted. It carries out the reaction glycerol + A = dihydroxyacetone + AH2. Its function is as follows. Catalyzes the oxidation of glycerol to glycerone. Also acts, more slowly, on a number of other polyols including D-sorbitol, D-arabinitol, D-mannitol, meso-erythritol, adonitol and propylene glycol. This chain is Glycerol dehydrogenase large subunit (sldA), found in Gluconobacter oxydans (strain 621H) (Gluconobacter suboxydans).